The chain runs to 118 residues: Class I hydrophobin hum2 (118 aa).

An N-terminal signal peptide occupies residues 1–19 (MQFKTIFATLAAFAAVASA). Intrachain disulfides connect Cys33/Cys98, Cys40/Cys92, Cys41/Cys74, and Cys99/Cys112.

The protein belongs to the fungal hydrophobin family. As to quaternary structure, self-assembles to form functional amyloid fibrils called rodlets. Self-assembly into fibrillar rodlets occurs spontaneously at hydrophobic:hydrophilic interfaces and the rodlets further associate laterally to form amphipathic monolayers.

Its subcellular location is the secreted. It localises to the cell wall. Functionally, aerial growth, conidiation, and dispersal of filamentous fungi in the environment rely upon a capability of their secreting small amphipathic proteins called hydrophobins (HPBs) with low sequence identity. Class I can self-assemble into an outermost layer of rodlet bundles on aerial cell surfaces, conferring cellular hydrophobicity that supports fungal growth, development and dispersal; whereas Class II form highly ordered films at water-air interfaces through intermolecular interactions but contribute nothing to the rodlet structure. Hum2 is a class I hydrophobin which that plays a role in, but seems not to be crucial for the formation of aerial hyphae. Hydrophobins of Mycosarcoma maydis have been functionally replaced, at least partially, by repellents. The polypeptide is Class I hydrophobin hum2 (Mycosarcoma maydis (Corn smut fungus)).